The primary structure comprises 620 residues: 1-deoxy-D-xylulose-5-phosphate synthase (620 aa).

Residues H80 and 121-123 (GHS) contribute to the thiamine diphosphate site. D152 is a Mg(2+) binding site. Thiamine diphosphate-binding positions include 153 to 154 (GA), N181, Y288, and E370. Residue N181 coordinates Mg(2+).

This sequence belongs to the transketolase family. DXPS subfamily. In terms of assembly, homodimer. Mg(2+) serves as cofactor. It depends on thiamine diphosphate as a cofactor.

The enzyme catalyses D-glyceraldehyde 3-phosphate + pyruvate + H(+) = 1-deoxy-D-xylulose 5-phosphate + CO2. Its pathway is metabolic intermediate biosynthesis; 1-deoxy-D-xylulose 5-phosphate biosynthesis; 1-deoxy-D-xylulose 5-phosphate from D-glyceraldehyde 3-phosphate and pyruvate: step 1/1. In terms of biological role, catalyzes the acyloin condensation reaction between C atoms 2 and 3 of pyruvate and glyceraldehyde 3-phosphate to yield 1-deoxy-D-xylulose-5-phosphate (DXP). The chain is 1-deoxy-D-xylulose-5-phosphate synthase from Pseudoalteromonas translucida (strain TAC 125).